Here is a 228-residue protein sequence, read N- to C-terminus: NADH-quinone oxidoreductase subunit C (228 aa).

Belongs to the complex I 30 kDa subunit family. In terms of assembly, NDH-1 is composed of 14 different subunits. Subunits NuoB, C, D, E, F, and G constitute the peripheral sector of the complex.

The protein localises to the cell membrane. The enzyme catalyses a quinone + NADH + 5 H(+)(in) = a quinol + NAD(+) + 4 H(+)(out). In terms of biological role, NDH-1 shuttles electrons from NADH, via FMN and iron-sulfur (Fe-S) centers, to quinones in the respiratory chain. The immediate electron acceptor for the enzyme in this species is believed to be a menaquinone. Couples the redox reaction to proton translocation (for every two electrons transferred, four hydrogen ions are translocated across the cytoplasmic membrane), and thus conserves the redox energy in a proton gradient. In Mycobacteroides abscessus (strain ATCC 19977 / DSM 44196 / CCUG 20993 / CIP 104536 / JCM 13569 / NCTC 13031 / TMC 1543 / L948) (Mycobacterium abscessus), this protein is NADH-quinone oxidoreductase subunit C.